Here is a 487-residue protein sequence, read N- to C-terminus: Cysteine--tRNA ligase (487 aa).

Cys-27 lines the Zn(2+) pocket. The short motif at 29-39 (ATVQGLPHVGH) is the 'HIGH' region element. The interval 174 to 194 (IDDMQGAPDADPRGKKDPRDF) is disordered. Positions 183-194 (ADPRGKKDPRDF) are enriched in basic and acidic residues. The Zn(2+) site is built by Cys-225, His-250, and Glu-254. The 'KMSKS' region motif lies at 281–285 (KMSKS). Residue Lys-284 coordinates ATP.

Belongs to the class-I aminoacyl-tRNA synthetase family. As to quaternary structure, monomer. Zn(2+) is required as a cofactor.

Its subcellular location is the cytoplasm. The enzyme catalyses tRNA(Cys) + L-cysteine + ATP = L-cysteinyl-tRNA(Cys) + AMP + diphosphate. This is Cysteine--tRNA ligase from Arthrobacter sp. (strain FB24).